An 815-amino-acid polypeptide reads, in one-letter code: Probable receptor-like protein kinase At2g39360 (815 aa).

Positions 1–26 are cleaved as a signal peptide; sequence MINLKLFLELKLCFLITLLCSSHISS. The Extracellular portion of the chain corresponds to 27–407; sequence VSDTFFINCG…SSSNKSSNTS (381 aa). Asparagine 40, asparagine 45, asparagine 125, asparagine 146, asparagine 209, asparagine 244, asparagine 277, asparagine 331, asparagine 355, asparagine 401, and asparagine 405 each carry an N-linked (GlcNAc...) asparagine glycan. Residues 408-428 traverse the membrane as a helical segment; the sequence is VGLIAGLSAALCVALVFGVVV. Residues 429–815 lie on the Cytoplasmic side of the membrane; that stretch reads SWWCIRKRRR…FAQMVREETR (387 aa). The Protein kinase domain occupies 487 to 761; it reads FDESLVIGVG…GDLLWNLEFM (275 aa). ATP contacts are provided by residues 493-501 and lysine 515; that span reads IGVGGFGKV. The Proton acceptor role is filled by aspartate 612.

This sequence belongs to the protein kinase superfamily. Ser/Thr protein kinase family.

It is found in the cell membrane. The chain is Probable receptor-like protein kinase At2g39360 from Arabidopsis thaliana (Mouse-ear cress).